A 24-amino-acid polypeptide reads, in one-letter code: Waglerin-3 (24 aa).

The span at 1-10 (SLGGKPDLRP) shows a compositional bias: basic and acidic residues. The segment at 1–24 (SLGGKPDLRPCHPPCHYIPRPKPR) is disordered. Cys-11 and Cys-15 are oxidised to a cystine.

Belongs to the waglerin family. As to quaternary structure, waglerin-1 is monomeric. Post-translationally, amidation of the waglerin-1 C-terminus increases the affinity by 2-fold. In terms of tissue distribution, expressed by the venom gland.

It localises to the secreted. Functionally, waglerin-1 selectively blocks the epsilon subunit of muscle nicotinic acetylcholine receptor (nAChR). Also has effects on rodent ionotropic GABA(A) receptors (GABR), since it potentiates I(GABA) in some neurons and depresses I(GABA) in others. In mice, it elicits tachypnea, ocular proptosis, rapid collapse and spasms, whereas no toxic effects on respiration and blood pressure are observed in rats. In terms of biological role, waglerin-3 selectively blocks the epsilon subunit of muscle nicotinic acetylcholine receptor (nAChR). It elicits tachypnea, ocular proptosis, rapid collapse and spasms in mice. It causes death by respiratory failure. This Tropidolaemus wagleri (Wagler's pit viper) protein is Waglerin-3.